A 124-amino-acid polypeptide reads, in one-letter code: Riboflavin kinase (124 aa).

Residue 10–15 (GLGKAA) coordinates CDP. Mg(2+) contacts are provided by Thr-39 and Asn-41. FMN is bound by residues Thr-93 and Glu-101. 106–109 (DKLR) lines the CDP pocket.

It belongs to the archaeal riboflavin kinase family. Mg(2+) is required as a cofactor.

The enzyme catalyses riboflavin + CTP = CDP + FMN + H(+). The protein operates within cofactor biosynthesis; FMN biosynthesis; FMN from riboflavin (CTP route): step 1/1. Its function is as follows. Catalyzes the CTP-dependent phosphorylation of riboflavin (vitamin B2) to form flavin mononucleotide (FMN). In Methanobrevibacter smithii (strain ATCC 35061 / DSM 861 / OCM 144 / PS), this protein is Riboflavin kinase.